A 540-amino-acid chain; its full sequence is Chaperonin GroEL 1 (540 aa).

Residues 29 to 32 (TLGP), 86 to 90 (DGTTT), glycine 413, 478 to 480 (NAA), and aspartate 494 each bind ATP.

This sequence belongs to the chaperonin (HSP60) family. As to quaternary structure, forms a cylinder of 14 subunits composed of two heptameric rings stacked back-to-back. Interacts with the co-chaperonin GroES.

It localises to the cytoplasm. It catalyses the reaction ATP + H2O + a folded polypeptide = ADP + phosphate + an unfolded polypeptide.. Functionally, together with its co-chaperonin GroES, plays an essential role in assisting protein folding. The GroEL-GroES system forms a nano-cage that allows encapsulation of the non-native substrate proteins and provides a physical environment optimized to promote and accelerate protein folding. In Mycobacterium sp. (strain JLS), this protein is Chaperonin GroEL 1.